The sequence spans 246 residues: Probable S-methyl-5'-thioinosine phosphorylase (246 aa).

Residues Thr-10 and 52-53 each bind phosphate; that span reads RH. Met-185 provides a ligand contact to substrate. Thr-186 serves as a coordination point for phosphate. 209 to 211 is a substrate binding site; that stretch reads NPA.

Belongs to the PNP/MTAP phosphorylase family. MTAP subfamily. As to quaternary structure, homotrimer.

The catalysed reaction is S-methyl-5'-thioinosine + phosphate = 5-(methylsulfanyl)-alpha-D-ribose 1-phosphate + hypoxanthine. Its pathway is purine metabolism; purine nucleoside salvage. Its function is as follows. Catalyzes the reversible phosphorylation of S-methyl-5'-thioinosine (MTI) to hypoxanthine and 5-methylthioribose-1-phosphate. Involved in the breakdown of S-methyl-5'-thioadenosine (MTA), a major by-product of polyamine biosynthesis. Catabolism of (MTA) occurs via deamination to MTI and phosphorolysis to hypoxanthine. The chain is Probable S-methyl-5'-thioinosine phosphorylase from Pseudomonas syringae pv. tomato (strain ATCC BAA-871 / DC3000).